Consider the following 354-residue polypeptide: Protein sex-lethal (354 aa).

Residues 1 to 21 (MYGNNNPGSNNNNGGYPPYGY) form a disordered region. RRM domains lie at 125–203 (TNLI…YARP) and 211–291 (TNLY…LAEE).

In terms of assembly, part of a complex containing fl(2)d, Sxl and vir. Part of a complex composed of at least mei-P26, bam, bgcn and Sxl; this complex is involved in translational repression of nanos mRNA. interacts with mei-p26. Interacts with nito. Interacts with Unr; cooperates with Unr to prevent translation of msl-2 transcripts. Interacts with how; promoting nuclear retention of msl-2 transcripts. Expressed in somatic tissues, but not in the pole cells, which are the precursors of the germline. Expressed in the anterior of the germarium.

It localises to the nucleus. Its subcellular location is the cytoplasm. Sex determination switch protein, which controls sexual development and dosage compensation in females. Sxl protein is only active in females: it is inactive in males throughout development. Acts as a mRNA-binding protein, which specifically binds to a subset of pre-mRNAs and mRNAs and regulates their processing and/or translation. Binds nanos mRNA and is involved in bam-bgcn mediated repression of nanos mRNA translation. Promotes sexual development by controlling the female-specific alternative splicing of the transformer (tra) pre-mRNA: binds tightly to a characteristic uridine-rich polypyrimidine tract at the non-sex specific 3' splice site in one of the tra introns, preventing the general splicing factor U2AF from binding to this site and forcing it to bind to the female-specific 3' splice site. Acts as an inhibitor of dosage compensation in females by preventing production of msl-2 protein, an essential component of the MSL complex, the complex that mediates X-chromosome dosage compensation. Specifically binds to uridine stretches in both the 5'- and 3'-UTR of msl-2 transcripts. Sxl first acts at the splicing level by promoting retention of an intron in the 5' UTR of msl-2 pre-mRNA. The retained intron contains Sxl-binding sites that are required for subsequent steps of repression: after msl-2 mRNA export into the cytoplasm, Sxl coordinates its translational repression by targeting early steps of translation initiation. Together with how, Sxl also prevents production of msl-2 protein by preventing nuclear export of msl-2 transcripts. Its function is as follows. Embryo-specific product, which is expressed early only in female embryos and specifies female-adult specific splicing. In Drosophila melanogaster (Fruit fly), this protein is Protein sex-lethal.